The sequence spans 32 residues: SFCIPFKPCKSDENCCKKFKCKTTGIVKLCRW.

3 disulfide bridges follow: Cys3/Cys16, Cys9/Cys21, and Cys15/Cys30.

As to expression, expressed by the venom gland.

The protein localises to the secreted. In terms of biological role, blocks voltage-gated sodium channels (Nav). Causes tail erection, scratching and a reduction in mobility at a dose level of 1.40 mg/mouse. The polypeptide is U5-ctenitoxin-Pn1a (Phoneutria nigriventer (Brazilian armed spider)).